We begin with the raw amino-acid sequence, 339 residues long: Fructose-1,6-bisphosphatase class 1 (339 aa).

Residues Glu94, Asp116, Leu118, and Asp119 each contribute to the Mg(2+) site. Residues 119-122 (DGSS), Asn210, and Lys276 contribute to the substrate site. A Mg(2+)-binding site is contributed by Glu282.

The protein belongs to the FBPase class 1 family. As to quaternary structure, homotetramer. The cofactor is Mg(2+).

It is found in the cytoplasm. The catalysed reaction is beta-D-fructose 1,6-bisphosphate + H2O = beta-D-fructose 6-phosphate + phosphate. The protein operates within carbohydrate biosynthesis; gluconeogenesis. This chain is Fructose-1,6-bisphosphatase class 1, found in Burkholderia ambifaria (strain ATCC BAA-244 / DSM 16087 / CCUG 44356 / LMG 19182 / AMMD) (Burkholderia cepacia (strain AMMD)).